Consider the following 231-residue polypeptide: MAGKKVLIVYAHQEPKSFNGSLKKVAVEELSKQGCTVTVSDLYSMNFEPRATRNDITGAPSNPDVFSYGIETHEAYKKKALTSDIFEEQRKVQEADLVIFQFPLYWFSVPAILKGWMDRVLCRGFAFDIPGFYDSGFLKGKLALLSLTTGGTAEMYTKDGVSGDFRYFLWPLQHGTLHFCGFKVLAPQISFGLDVSSEEERKVMLASWAQRLKSIWKEEPIHCTPPWYFQE.

FAD-binding positions include His12, 18–21 (FNGS), and 104–107 (LYWF). 127–129 (FDI) is a binding site for substrate. Residues 148 to 151 (TTGG) and Tyr156 contribute to the FAD site. The Zn(2+) site is built by His174 and His178. Asp194 provides a ligand contact to FAD. Ser197 is subject to Phosphoserine. Residue Arg201 participates in FAD binding. Residue Cys223 coordinates Zn(2+).

It belongs to the NAD(P)H dehydrogenase (quinone) family. In terms of assembly, homodimer. Requires Zn(2+) as cofactor. It depends on FAD as a cofactor.

Its subcellular location is the cytoplasm. The enzyme catalyses 1-(beta-D-ribofuranosyl)-1,4-dihydronicotinamide + a quinone + H(+) = beta-nicotinamide D-riboside + a quinol. Functionally, the enzyme apparently serves as a quinone reductase in connection with conjugation reactions of hydroquinones involved in detoxification pathways as well as in biosynthetic processes such as the vitamin K-dependent gamma-carboxylation of glutamate residues in prothrombin synthesis. In Mus musculus (Mouse), this protein is Ribosyldihydronicotinamide dehydrogenase [quinone] (Nqo2).